We begin with the raw amino-acid sequence, 291 residues long: ATP synthase gamma chain (291 aa).

The protein belongs to the ATPase gamma chain family. F-type ATPases have 2 components, CF(1) - the catalytic core - and CF(0) - the membrane proton channel. CF(1) has five subunits: alpha(3), beta(3), gamma(1), delta(1), epsilon(1). CF(0) has three main subunits: a, b and c.

Its subcellular location is the cell inner membrane. Produces ATP from ADP in the presence of a proton gradient across the membrane. The gamma chain is believed to be important in regulating ATPase activity and the flow of protons through the CF(0) complex. The polypeptide is ATP synthase gamma chain (Ruegeria pomeroyi (strain ATCC 700808 / DSM 15171 / DSS-3) (Silicibacter pomeroyi)).